The sequence spans 431 residues: Enolase (431 aa).

A (2R)-2-phosphoglycerate-binding site is contributed by Gln163. Glu205 acts as the Proton donor in catalysis. Positions 242, 288, and 315 each coordinate Mg(2+). (2R)-2-phosphoglycerate-binding residues include Lys340, Arg369, Ser370, and Lys391. Lys340 functions as the Proton acceptor in the catalytic mechanism.

The protein belongs to the enolase family. The cofactor is Mg(2+).

The protein localises to the cytoplasm. The protein resides in the secreted. It is found in the cell surface. It carries out the reaction (2R)-2-phosphoglycerate = phosphoenolpyruvate + H2O. It participates in carbohydrate degradation; glycolysis; pyruvate from D-glyceraldehyde 3-phosphate: step 4/5. Its function is as follows. Catalyzes the reversible conversion of 2-phosphoglycerate (2-PG) into phosphoenolpyruvate (PEP). It is essential for the degradation of carbohydrates via glycolysis. The protein is Enolase of Bacillus cereus (strain G9842).